Reading from the N-terminus, the 586-residue chain is Arginine--tRNA ligase (586 aa).

The short motif at 128-138 (ANPTGPLHVGH) is the 'HIGH' region element.

This sequence belongs to the class-I aminoacyl-tRNA synthetase family. Monomer.

The protein localises to the cytoplasm. It carries out the reaction tRNA(Arg) + L-arginine + ATP = L-arginyl-tRNA(Arg) + AMP + diphosphate. This Coxiella burnetii (strain RSA 331 / Henzerling II) protein is Arginine--tRNA ligase.